The primary structure comprises 412 residues: Probable tRNA pseudouridine synthase D (412 aa).

D97 functions as the Nucleophile in the catalytic mechanism. The 204-residue stretch at 167–370 (ALPNYYGYQR…YGSYRRARLQ (204 aa)) folds into the TRUD domain.

Belongs to the pseudouridine synthase TruD family.

It catalyses the reaction uridine(13) in tRNA = pseudouridine(13) in tRNA. In terms of biological role, could be responsible for synthesis of pseudouridine from uracil-13 in transfer RNAs. This Pyrobaculum neutrophilum (strain DSM 2338 / JCM 9278 / NBRC 100436 / V24Sta) (Thermoproteus neutrophilus) protein is Probable tRNA pseudouridine synthase D.